Here is a 132-residue protein sequence, read N- to C-terminus: NAD(P) transhydrogenase subunit alpha part 2 (132 aa).

The next 3 membrane-spanning stretches (helical) occupy residues 43–63 (PLVF…YVVW), 72–92 (PLMS…MIAI), and 103–123 (LLGS…FIVT).

As to quaternary structure, complex of an alpha and a beta chain; in Rickettsia, the alpha chain seems to be made of two subunits.

Its subcellular location is the cell inner membrane. It carries out the reaction NAD(+) + NADPH + H(+)(in) = NADH + NADP(+) + H(+)(out). In terms of biological role, the transhydrogenation between NADH and NADP is coupled to respiration and ATP hydrolysis and functions as a proton pump across the membrane. The protein is NAD(P) transhydrogenase subunit alpha part 2 (pntAB) of Rickettsia prowazekii (strain Madrid E).